A 938-amino-acid chain; its full sequence is Glutamate receptor ionotropic, NMDA 1 (938 aa).

A signal peptide spans 1-18; that stretch reads MSTMRLLTLALLFSCSVA. Topologically, residues 19 to 559 are extracellular; it reads RAACDPKIVN…TLDSFMQPFQ (541 aa). Residues Asn-61, Asn-203, Asn-239, Asn-276, Asn-300, Asn-350, Asn-368, Asn-440, Asn-471, and Asn-491 are each glycosylated (N-linked (GlcNAc...) asparagine). Cys-79 and Cys-308 form a disulfide bridge. Disulfide bonds link Cys-420–Cys-454 and Cys-436–Cys-455. Residues Pro-516, Thr-518, and Arg-523 each coordinate glycine. A helical membrane pass occupies residues 560 to 580; it reads STLWLLVGLSVHVVAVMLYLL. Residues 581–604 are Cytoplasmic-facing; that stretch reads DRFSPFGRFKVNSEEEEEDALTLS. Positions 603 to 624 are pore-forming; sequence LSSAMWFSWGVLLNSGIGEGAP. Positions 605–615 form an intramembrane region, discontinuously helical; it reads SAMWFSWGVLL. The Cytoplasmic portion of the chain corresponds to 616-627; it reads NSGIGEGAPRSF. A helical membrane pass occupies residues 628-648; that stretch reads SARILGMVWAGFAMIIVASYT. The Extracellular portion of the chain corresponds to 649-811; that stretch reads ANLAAFLVLD…SNAPATLTFE (163 aa). Asn-674 carries N-linked (GlcNAc...) asparagine glycosylation. Glycine-binding residues include Ser-688 and Asp-732. Cys-744 and Cys-798 are joined by a disulfide. Asn-771 carries N-linked (GlcNAc...) asparagine glycosylation. The helical transmembrane segment at 812 to 835 threads the bilayer; it reads NMAGVFMLVAGGIVAGIFLIFIEI. Residues 836–938 are Cytoplasmic-facing; that stretch reads AYKRHKDARR…LQLCSRHRES (103 aa). Phosphoserine; by PKC occurs at positions 889, 890, 896, and 897. Residues 889 to 938 form a disordered region; that stretch reads SSFKRRRSSKDTSTGGGRGALQNQKDTVLPRRAIEREEGQLQLCSRHRES. Positions 916 to 927 are enriched in basic and acidic residues; sequence VLPRRAIEREEG.

The protein belongs to the glutamate-gated ion channel (TC 1.A.10.1) family. NR1/GRIN1 subfamily. Heterotetramer; the NMDAR subunits are modular and harbor tiered domains that function in concert to regulate opening and closing of the cation-selective ion channel pore. Forms heterotetrameric channels composed of two GluN1/zeta subunits (GRIN1), and two identical GluN2/epsilon subunits (GRIN2A, GRIN2B, GRIN2C or GRIN2D) or GluN3 subunits (GRIN3A or GRIN3B) (in vitro). Can also form heterotetrameric channels that contain at least two GluN1 subunits and at least two different GluN2 subunits (or a combination of one GluN2 and one GluN3 subunits) (in vitro). In vivo, the subunit composition may vary in function of the expression levels of the different subunits. Found in a complex with GRIN2A or GRIN2B, GRIN3A and PPP2CB. Found in a complex with GRIN2A or GRIN2B and GRIN3B. Interacts with SNX27 (via PDZ domain); the interaction is required for recycling to the plasma membrane when endocytosed and prevent degradation in lysosomes. Interacts with DLG4 and MPDZ. Interacts with LRFN1 and LRFN2. Interacts with MYZAP. Found in a complex with DLG4 and PRR7. Found in a complex with GRIN2B and PRR7. Interacts with PRR7; the interaction is reduced following NMDA receptor activity. Post-translationally, NMDA is probably regulated by C-terminal phosphorylation of an isoform of GRIN1 by PKC. Dephosphorylated on Ser-897 probably by protein phosphatase 2A (PPP2CB). Its phosphorylated state is influenced by the formation of the NMDAR-PPP2CB complex and the NMDAR channel activity.

Its subcellular location is the cell membrane. The protein localises to the postsynaptic cell membrane. The protein resides in the postsynaptic density membrane. It localises to the synaptic cell membrane. It carries out the reaction Ca(2+)(in) = Ca(2+)(out). The enzyme catalyses Na(+)(in) = Na(+)(out). The catalysed reaction is K(+)(in) = K(+)(out). Its activity is regulated as follows. NMDA glutamate receptor activity is inhbited by Mg2(+) in a voltage-dependent manner; Mg2(+)-induced blockade occurs only at negative potentials and decreases with membrane depolarization. 7-chlorokynurenate (50 uM) or Zn2(+) (100 uM) partially inhibit the NMDA glutamate receptor activity, while acide 2-amino-5-phosphonovalerique(100 uM) almost completely blocked the NMDA glutamate receptor activity. Dizocilpine (1 uM) results in long lasting and almost complete block of the NMDA glutamate receptor activity. Component of N-methyl-D-aspartate (NMDA) receptors (NMDARs) that function as heterotetrameric, ligand-gated cation channels with high calcium permeability and voltage-dependent block by Mg(2+). NMDARs participate in synaptic plasticity for learning and memory formation by contributing to the long-term potentiation (LTP). Channel activation requires binding of the neurotransmitter L-glutamate to the GluN2 subunit, glycine or D-serine binding to the GluN1 subunit, plus membrane depolarization to eliminate channel inhibition by Mg(2+). NMDARs mediate simultaneously the potasium efflux and the influx of calcium and sodium. Each GluN2 or GluN3 subunit confers differential attributes to channel properties, including activation, deactivation and desensitization kinetics, pH sensitivity, Ca2(+) permeability, and binding to allosteric modulators. In Homo sapiens (Human), this protein is Glutamate receptor ionotropic, NMDA 1.